Consider the following 129-residue polypeptide: Small ribosomal subunit protein uS11 (129 aa).

This sequence belongs to the universal ribosomal protein uS11 family. As to quaternary structure, part of the 30S ribosomal subunit. Interacts with proteins S7 and S18. Binds to IF-3.

Functionally, located on the platform of the 30S subunit, it bridges several disparate RNA helices of the 16S rRNA. Forms part of the Shine-Dalgarno cleft in the 70S ribosome. In Aliivibrio fischeri (strain ATCC 700601 / ES114) (Vibrio fischeri), this protein is Small ribosomal subunit protein uS11.